Reading from the N-terminus, the 130-residue chain is uncharacterized protein (130 aa).

Residues 1–18 (MVEVWWSLIGAAVPALIA) form the signal peptide.

This is an uncharacterized protein from Arabidopsis thaliana (Mouse-ear cress).